A 342-amino-acid polypeptide reads, in one-letter code: MGPSLETPEPVEDVLANPLKQKPQLVAPEPEHCPGPESEQAGTADSCAGCPNQAICASAPKGPDPDLPAITARLAGVKHKILVLSGKGGVGKSTLTAQLAQALATNPEATVGVMDTDICGPSIPKMLGVEAETIHVSGSGWSPVWAADNLAVMSIQFMLPNRDDAIIWRGPKKNGLIKQFLKDVEWGDLDFLLVDTPPGTSDEHLSVNTFLKESRIEGAVVVTTPQEVSLLDVRKEIDFCRKAGIRILGLVENMSLFVCPKCTHATEIFQATTGGGRALAAEMGIPFLGAVPLDPRLGMACDYGESFFDSFPDSPACLALKQVVRGLAGQIGLDPKEVVPEG.

Residues 1 to 45 (MGPSLETPEPVEDVLANPLKQKPQLVAPEPEHCPGPESEQAGTAD) are disordered. The [4Fe-4S] cluster site is built by Cys-33, Cys-47, Cys-50, and Cys-56. Position 86–93 (86–93 (GKGGVGKS)) interacts with ATP. Residues Cys-259 and Cys-262 each contribute to the [4Fe-4S] cluster site.

This sequence belongs to the Mrp/NBP35 ATP-binding proteins family. NUBP1/NBP35 subfamily. Heterotetramer of 2 NBP35 and 2 CFD1 chains. It depends on [4Fe-4S] cluster as a cofactor.

It localises to the cytoplasm. Functionally, component of the cytosolic iron-sulfur (Fe/S) protein assembly (CIA) machinery. Required for maturation of extramitochondrial Fe-S proteins. The NBP35-CFD1 heterotetramer forms a Fe-S scaffold complex, mediating the de novo assembly of an Fe-S cluster and its transfer to target apoproteins. This Chaetomium globosum (strain ATCC 6205 / CBS 148.51 / DSM 1962 / NBRC 6347 / NRRL 1970) (Soil fungus) protein is Cytosolic Fe-S cluster assembly factor NBP35.